Here is a 211-residue protein sequence, read N- to C-terminus: uncharacterized protein (211 aa).

This is an uncharacterized protein from Methanocaldococcus jannaschii (strain ATCC 43067 / DSM 2661 / JAL-1 / JCM 10045 / NBRC 100440) (Methanococcus jannaschii).